A 404-amino-acid chain; its full sequence is MEDSNSYIRVSGFVLGSLMFQHLNSDSDVEGLILGETKAEERSNITDSQIDNIQFEHTINIQKHISCRKLNSFYNRIGEVNRDEIRHILSNYKEENVIGWYKQRRNTDQQITFREQVVHENLKRALSNHELIFLLLTPSEITTSGSTHKLEYAVYRSHGSQYCSVPVLVSNLGLLEEQDYWRLSASCSSVNYNHAVRKHRSKFFSSDGSLHEVDEINDMNNSLQGELKMACKKVEESERLVEKLLADVSDLRRMVNERKQELREISADGASTPAQPRENVLLCEVIKTLFPGASLLQTQALNFQGFPLPEFCCSTDHGIDIATTLPLILSHTLPKARKGRLGRGGGTSWRKCPLRESSEVPKRRKGMLEETDETLSVSGSETEEDLIPANRNGNNLDVSNSPVF.

Residues 7-161 form the MPN domain; the sequence is YIRVSGFVLG…YAVYRSHGSQ (155 aa). Positions 219 to 268 form a coiled coil; the sequence is MNNSLQGELKMACKKVEESERLVEKLLADVSDLRRMVNERKQELREISAD. Residues 339-404 form a disordered region; sequence GRLGRGGGTS…NLDVSNSPVF (66 aa). The span at 391-404 shows a compositional bias: polar residues; the sequence is RNGNNLDVSNSPVF. Phosphoserine is present on Ser401. Positions 401–404 match the pSXXF motif motif; it reads SPVF.

The protein belongs to the FAM175 family. Abraxas subfamily. Component of the BRCA1-A complex. Component of the BRISC complex. Homodimer. Interacts directly (when phosphorylated at Ser-401) with brca1. The phosphorylated homodimer can interact directly with two brca1 chains, giving rise to a heterotetramer. In terms of processing, phosphorylation of Ser-401 of the pSXXF motif by ATM or ATR constitutes a specific recognition motif for the BRCT domain of BRCA1.

Its subcellular location is the nucleus. In terms of biological role, involved in DNA damage response and double-strand break (DSB) repair. Component of the BRCA1-A complex, acting as a central scaffold protein that assembles the various components of the complex and mediates the recruitment of brca1. The BRCA1-A complex specifically recognizes 'Lys-63'-linked ubiquitinated histones H2A and H2AX at DNA lesion sites, leading to target the brca1-bard1 heterodimer to sites of DNA damage at DSBs. This complex also possesses deubiquitinase activity that specifically removes 'Lys-63'-linked ubiquitin on histones H2A and H2AX. The sequence is that of BRCA1-A complex subunit Abraxas 1 from Salmo salar (Atlantic salmon).